The sequence spans 26 residues: uncharacterized protein (26 aa).

Its subcellular location is the plastid. It localises to the chloroplast. This is an uncharacterized protein from Trieres chinensis (Marine centric diatom).